We begin with the raw amino-acid sequence, 366 residues long: Eukaryotic translation initiation factor 3 subunit H (366 aa).

An MPN domain is found at 12–161; it reads VKVEALVVMK…LRAFRLSPKF (150 aa).

The protein belongs to the eIF-3 subunit H family. As to quaternary structure, component of the eukaryotic translation initiation factor 3 (eIF-3) complex.

It is found in the cytoplasm. Its function is as follows. Component of the eukaryotic translation initiation factor 3 (eIF-3) complex, which is involved in protein synthesis of a specialized repertoire of mRNAs and, together with other initiation factors, stimulates binding of mRNA and methionyl-tRNAi to the 40S ribosome. The eIF-3 complex specifically targets and initiates translation of a subset of mRNAs involved in cell proliferation. This Emericella nidulans (strain FGSC A4 / ATCC 38163 / CBS 112.46 / NRRL 194 / M139) (Aspergillus nidulans) protein is Eukaryotic translation initiation factor 3 subunit H.